A 458-amino-acid chain; its full sequence is Transmembrane protein 135 (458 aa).

6 consecutive transmembrane segments (helical) span residues 68–88, 96–116, 149–169, 298–318, 331–351, and 380–400; these read ILQS…FFCI, FYLW…AILV, TLRN…MFFF, FQLG…SCFL, IIAG…TISM, and IIYS…VQTL.

Belongs to the TMEM135 family.

The protein resides in the mitochondrion membrane. Its subcellular location is the peroxisome membrane. In terms of biological role, involved in mitochondrial metabolism by regulating the balance between mitochondrial fusion and fission. May act as a regulator of mitochondrial fission that promotes DNM1L-dependent fission through activation of DNM1L. May be involved in peroxisome organization. The sequence is that of Transmembrane protein 135 from Bos taurus (Bovine).